Consider the following 1642-residue polypeptide: Mitochondrial 3' processome subunit 2 (1642 aa).

The transit peptide at Met1 to Phe27 directs the protein to the mitochondrion. Disordered stretches follow at residues Glu43–Lys69 and Lys745–Pro772. Polar residues predominate over residues Glu49–Ser65.

As to quaternary structure, component of the mitochondrial 3' processome (MPsome) complex composed at least of terminal uridylyltransferase KRET1/TUT1, 3'-5' exonuclease DSS1, MPSS1, MPSS2 and MPSS3. Within the complex, interacts with DSS1.

The protein localises to the mitochondrion. In terms of biological role, as part of the mitochondrial 3' processome (MPsome), involved in the maturation of guided RNA (gRNA) precursors. This is Mitochondrial 3' processome subunit 2 from Trypanosoma brucei brucei.